The following is a 130-amino-acid chain: Ribosome-binding factor A (130 aa).

The protein belongs to the RbfA family. In terms of assembly, monomer. Binds 30S ribosomal subunits, but not 50S ribosomal subunits or 70S ribosomes.

It localises to the cytoplasm. Its function is as follows. One of several proteins that assist in the late maturation steps of the functional core of the 30S ribosomal subunit. Associates with free 30S ribosomal subunits (but not with 30S subunits that are part of 70S ribosomes or polysomes). Required for efficient processing of 16S rRNA. May interact with the 5'-terminal helix region of 16S rRNA. The sequence is that of Ribosome-binding factor A from Alkalilimnicola ehrlichii (strain ATCC BAA-1101 / DSM 17681 / MLHE-1).